The following is a 553-amino-acid chain: COP9 signalosome complex subunit 10 (553 aa).

The segment covering 21-46 (AEMEEDSDEMGVYEEETSQGAEEEVP) has biased composition (acidic residues). The disordered stretch occupies residues 21-47 (AEMEEDSDEMGVYEEETSQGAEEEVPL). One can recognise a PCI domain in the interval 298–474 (LRTHFSACLQ…DYVYFGDEPR (177 aa)).

In terms of assembly, component of a COP9 signalosome-like (CSN) complex.

It is found in the cytoplasm. Its subcellular location is the nucleus. Functionally, component of the COP9 signalosome (CSN) complex that acts as an regulator of the ubiquitin (Ubl) conjugation pathway by mediating the deneddylation of the cullin subunit of SCF-type E3 ubiquitin-protein ligase complexes. The CSN complex is involved in the regulation of the mating pheromone response. This is COP9 signalosome complex subunit 10 (RRI2) from Eremothecium gossypii (strain ATCC 10895 / CBS 109.51 / FGSC 9923 / NRRL Y-1056) (Yeast).